The chain runs to 68 residues: Large ribosomal subunit protein bL33c (68 aa).

It belongs to the bacterial ribosomal protein bL33 family.

Its subcellular location is the plastid. It localises to the chloroplast. In Lactuca sativa (Garden lettuce), this protein is Large ribosomal subunit protein bL33c.